A 513-amino-acid chain; its full sequence is Probable hydrolase YhcX (513 aa).

An N-acetyltransferase domain is found at 14 to 212 (MVIRNIEEKD…YATLMEWNNV (199 aa)). One can recognise a CN hydrolase domain in the interval 229-484 (VRICVIQYEM…EMVVIGDVDL (256 aa)). Glu270 serves as the catalytic Proton acceptor. Residue Lys345 is the Proton donor of the active site. Cys379 serves as the catalytic Nucleophile.

The protein belongs to the carbon-nitrogen hydrolase superfamily. NIT1/NIT2 family.

This is Probable hydrolase YhcX (yhcX) from Bacillus subtilis (strain 168).